We begin with the raw amino-acid sequence, 38 residues long: Large ribosomal subunit protein bL36 (38 aa).

The protein belongs to the bacterial ribosomal protein bL36 family.

The protein is Large ribosomal subunit protein bL36 of Chlorobaculum parvum (strain DSM 263 / NCIMB 8327) (Chlorobium vibrioforme subsp. thiosulfatophilum).